A 154-amino-acid polypeptide reads, in one-letter code: SsrA-binding protein (154 aa).

Residues 134–154 (ETLRRRDAKREVERALKEKNR) form a disordered region.

The protein belongs to the SmpB family.

It is found in the cytoplasm. Its function is as follows. Required for rescue of stalled ribosomes mediated by trans-translation. Binds to transfer-messenger RNA (tmRNA), required for stable association of tmRNA with ribosomes. tmRNA and SmpB together mimic tRNA shape, replacing the anticodon stem-loop with SmpB. tmRNA is encoded by the ssrA gene; the 2 termini fold to resemble tRNA(Ala) and it encodes a 'tag peptide', a short internal open reading frame. During trans-translation Ala-aminoacylated tmRNA acts like a tRNA, entering the A-site of stalled ribosomes, displacing the stalled mRNA. The ribosome then switches to translate the ORF on the tmRNA; the nascent peptide is terminated with the 'tag peptide' encoded by the tmRNA and targeted for degradation. The ribosome is freed to recommence translation, which seems to be the essential function of trans-translation. This chain is SsrA-binding protein, found in Halalkalibacterium halodurans (strain ATCC BAA-125 / DSM 18197 / FERM 7344 / JCM 9153 / C-125) (Bacillus halodurans).